The chain runs to 175 residues: Ribosome maturation factor RimM (175 aa).

Residues 96–175 (EEDFYWRDLI…LIQVNWEPDF (80 aa)) form the PRC barrel domain.

Belongs to the RimM family. As to quaternary structure, binds ribosomal protein uS19.

It is found in the cytoplasm. Its function is as follows. An accessory protein needed during the final step in the assembly of 30S ribosomal subunit, possibly for assembly of the head region. Essential for efficient processing of 16S rRNA. May be needed both before and after RbfA during the maturation of 16S rRNA. It has affinity for free ribosomal 30S subunits but not for 70S ribosomes. This chain is Ribosome maturation factor RimM, found in Psychromonas ingrahamii (strain DSM 17664 / CCUG 51855 / 37).